The sequence spans 197 residues: MQLKRVAEAKLPTPWGDFLMVGFEELATGQDHVALVFGDISGTEPVLARVHSECLTGDALFSLRCDCGFQLEAALSHIAEAGRGVLLYHRQEGRNIGLLNKIRAYALQDQGYDTVEANHQLGFAADERDFTLCADMFKLLGVDEVRLLTNNPRKVEILTEAGINIVERVPLIVGRNPKNEHYLDTKAAKMGHLLSGN.

49–53 (RVHSE) contacts GTP. Zn(2+) is bound by residues Cys54, Cys65, and Cys67. Residues Gln70, 92–94 (EGR), and Thr114 contribute to the GTP site. Asp126 acts as the Proton acceptor in catalysis. Arg128 serves as the catalytic Nucleophile. GTP is bound by residues Thr149 and Lys154.

Belongs to the GTP cyclohydrolase II family. In terms of assembly, homodimer. It depends on Zn(2+) as a cofactor.

The enzyme catalyses GTP + 4 H2O = 2,5-diamino-6-hydroxy-4-(5-phosphoribosylamino)-pyrimidine + formate + 2 phosphate + 3 H(+). It functions in the pathway cofactor biosynthesis; riboflavin biosynthesis; 5-amino-6-(D-ribitylamino)uracil from GTP: step 1/4. Catalyzes the conversion of GTP to 2,5-diamino-6-ribosylamino-4(3H)-pyrimidinone 5'-phosphate (DARP), formate and pyrophosphate. In Cronobacter sakazakii (strain ATCC BAA-894) (Enterobacter sakazakii), this protein is GTP cyclohydrolase-2.